Reading from the N-terminus, the 959-residue chain is Leucine--tRNA ligase (959 aa).

The 'HIGH' region signature appears at 39–49; sequence PYVNAYPHLGS. Positions 637-641 match the 'KMSKS' region motif; the sequence is KMSKS. Residue K640 participates in ATP binding. The segment at 933-959 is disordered; the sequence is TEEDGGSPRRANALPGRPALYAEKRGG.

The protein belongs to the class-I aminoacyl-tRNA synthetase family.

It localises to the cytoplasm. The catalysed reaction is tRNA(Leu) + L-leucine + ATP = L-leucyl-tRNA(Leu) + AMP + diphosphate. This is Leucine--tRNA ligase from Aeropyrum pernix (strain ATCC 700893 / DSM 11879 / JCM 9820 / NBRC 100138 / K1).